A 785-amino-acid chain; its full sequence is SUN domain-containing protein 1 (785 aa).

The tract at residues Met1–Ser138 is LMNA-binding. At Met1–Asn288 the chain is on the nuclear side. Ser48, Ser100, and Ser138 each carry phosphoserine. Residue Lys195 forms a Glycyl lysine isopeptide (Lys-Gly) (interchain with G-Cter in SUMO2) linkage. An SYNE2-binding region spans residues Ser209–Arg309. An EMD-binding region spans residues Leu223–Arg309. A helical membrane pass occupies residues Ile289 to Leu308. At Arg309–Lys785 the chain is on the perinuclear space side. Asp333 and Ser344 each carry phosphoserine. Residues His428–Val495 adopt a coiled-coil conformation. Residues Thr574–Lys785 are sufficient for interaction with SYNE1 and SYNE2. The SUN domain maps to Gly622 to Val784.

As to quaternary structure, core component of the LINC complex which is composed of inner nuclear membrane SUN domain-containing proteins coupled to outer nuclear membrane KASH domain-containing nesprins. SUN and KASH domain-containing proteins seem to bind each other promiscuously; however, differentially expression of LINC complex constituents is giving rise to specific assemblies. At least SUN1/2-containing core LINC complexes are proposed to be hexameric composed of three protomers of each KASH and SUN domain-containing protein. Interacts with KASH5 (via the last 22 amino acids); this interaction mediates KASH5 telomere localization by forming a SUN1:KASH5 LINC complex. May interact with SYNE3. Interacts with SYNE2 and SYNE1; probably forming respective LINC complexes. Interacts with A-type lamin with a strong preference for unprocessed A-type lamin compared with the mature protein. Interaction with lamins B1 and C is hardly detectable. Interacts with NAT10. Interacts with EMD and TSNAX. Associates with the nuclear pore complex (NPC). Interacts with CCDC79/TERB1; promoting the accumulation of the LINC complex complexes at the telomere-nuclear envelope attachment sites. Interacts (via KASH domain) with TMEM258. Post-translationally, the disulfide bond with KASH domain-containing nesprins is required for stability of the respective LINC complexes under tensile forces.

It is found in the nucleus inner membrane. Its function is as follows. As a component of the LINC (LInker of Nucleoskeleton and Cytoskeleton) complex involved in the connection between the nuclear lamina and the cytoskeleton. The nucleocytoplasmic interactions established by the LINC complex play an important role in the transmission of mechanical forces across the nuclear envelope and in nuclear movement and positioning. Required for interkinetic nuclear migration (INM) and essential for nucleokinesis and centrosome-nucleus coupling during radial neuronal migration in the cerebral cortex and during glial migration. Involved in telomere attachment to nuclear envelope in the prophase of meiosis implicating a SUN1/2:KASH5 LINC complex in which SUN1 and SUN2 seem to act at least partial redundantly. Required for gametogenesis and involved in selective gene expression of coding and non-coding RNAs needed for gametogenesis. Helps to define the distribution of nuclear pore complexes (NPCs). Required for efficient localization of SYNE4 in the nuclear envelope. May be involved in nuclear remodeling during sperm head formation in spermatogenesis. May play a role in DNA repair by suppressing non-homologous end joining repair to facilitate the repair of DNA cross-links. The sequence is that of SUN domain-containing protein 1 from Homo sapiens (Human).